Consider the following 721-residue polypeptide: Polyribonucleotide nucleotidyltransferase (721 aa).

D495 and D501 together coordinate Mg(2+). A KH domain is found at 562–621 (PRLLSFRIDPELIGTVIGPGGRTIKGITERTNTKIDIEDGGIVTIASHDGAAAEEAQKII). Positions 631-699 (GEIFSGVVTR…SRGRINLTLR (69 aa)) constitute an S1 motif domain. The interval 701–721 (VGQNNGMSYPEPTPTPVAPLN) is disordered. Positions 711 to 721 (EPTPTPVAPLN) are enriched in pro residues.

This sequence belongs to the polyribonucleotide nucleotidyltransferase family. Mg(2+) is required as a cofactor.

The protein resides in the cytoplasm. It carries out the reaction RNA(n+1) + phosphate = RNA(n) + a ribonucleoside 5'-diphosphate. In terms of biological role, involved in mRNA degradation. Catalyzes the phosphorolysis of single-stranded polyribonucleotides processively in the 3'- to 5'-direction. The sequence is that of Polyribonucleotide nucleotidyltransferase from Prochlorococcus marinus (strain MIT 9215).